Reading from the N-terminus, the 141-residue chain is Hemoglobin subunit alpha (141 aa).

One can recognise a Globin domain in the interval 1–141 (VLSSADKNNV…VSTVLTSKYR (141 aa)). Residue S3 is modified to Phosphoserine. K7 and K11 each carry N6-succinyllysine. Residue K16 is modified to N6-acetyllysine; alternate. The residue at position 16 (K16) is an N6-succinyllysine; alternate. Y24 is subject to Phosphotyrosine. S35 bears the Phosphoserine mark. An N6-succinyllysine modification is found at K40. Residue S49 is modified to Phosphoserine. Position 58 (H58) interacts with O2. H87 is a heme b binding site. S102 bears the Phosphoserine mark. T108 carries the post-translational modification Phosphothreonine. The residue at position 124 (S124) is a Phosphoserine. Phosphothreonine is present on residues T134 and T137. S138 carries the post-translational modification Phosphoserine.

It belongs to the globin family. As to quaternary structure, heterotetramer of two alpha chains and two beta chains. As to expression, red blood cells.

Functionally, involved in oxygen transport from the lung to the various peripheral tissues. Hemopressin acts as an antagonist peptide of the cannabinoid receptor CNR1. Hemopressin-binding efficiently blocks cannabinoid receptor CNR1 and subsequent signaling. This Panthera pardus saxicolor (Northern Persian leopard) protein is Hemoglobin subunit alpha (HBA).